The following is a 528-amino-acid chain: Glutamyl-tRNA(Gln) amidotransferase subunit B, mitochondrial (528 aa).

It belongs to the GatB/GatE family. GatB subfamily. As to quaternary structure, subunit of the heterotrimeric GatFAB amidotransferase (AdT) complex, composed of A, B and F subunits.

It localises to the mitochondrion. It carries out the reaction L-glutamyl-tRNA(Gln) + L-glutamine + ATP + H2O = L-glutaminyl-tRNA(Gln) + L-glutamate + ADP + phosphate + H(+). Allows the formation of correctly charged Gln-tRNA(Gln) through the transamidation of misacylated Glu-tRNA(Gln) in the mitochondria. The reaction takes place in the presence of glutamine and ATP through an activated gamma-phospho-Glu-tRNA(Gln). The protein is Glutamyl-tRNA(Gln) amidotransferase subunit B, mitochondrial of Clavispora lusitaniae (strain ATCC 42720) (Yeast).